Reading from the N-terminus, the 326-residue chain is Flap endonuclease 1 (326 aa).

The N-domain stretch occupies residues 1–98 (MGVQFGDFIP…KTRKVRREMK (98 aa)). Residues aspartate 27, aspartate 80, glutamate 152, glutamate 154, aspartate 173, aspartate 175, and aspartate 224 each contribute to the Mg(2+) site. Positions 116–245 (EAAKYAKRVS…KRAYELVRSG (130 aa)) are I-domain. Positions 317–325 (KQKTLDAWF) are interaction with PCNA.

The protein belongs to the XPG/RAD2 endonuclease family. FEN1 subfamily. As to quaternary structure, interacts with PCNA. PCNA stimulates the nuclease activity without altering cleavage specificity. Mg(2+) serves as cofactor.

In terms of biological role, structure-specific nuclease with 5'-flap endonuclease and 5'-3' exonuclease activities involved in DNA replication and repair. During DNA replication, cleaves the 5'-overhanging flap structure that is generated by displacement synthesis when DNA polymerase encounters the 5'-end of a downstream Okazaki fragment. Binds the unpaired 3'-DNA end and kinks the DNA to facilitate 5' cleavage specificity. Cleaves one nucleotide into the double-stranded DNA from the junction in flap DNA, leaving a nick for ligation. Also involved in the base excision repair (BER) pathway. Acts as a genome stabilization factor that prevents flaps from equilibrating into structures that lead to duplications and deletions. Also possesses 5'-3' exonuclease activity on nicked or gapped double-stranded DNA. This Methanocaldococcus jannaschii (strain ATCC 43067 / DSM 2661 / JAL-1 / JCM 10045 / NBRC 100440) (Methanococcus jannaschii) protein is Flap endonuclease 1.